A 405-amino-acid polypeptide reads, in one-letter code: Tryptophan synthase beta chain (405 aa).

Lys95 carries the post-translational modification N6-(pyridoxal phosphate)lysine.

It belongs to the TrpB family. In terms of assembly, tetramer of two alpha and two beta chains. Pyridoxal 5'-phosphate serves as cofactor.

It carries out the reaction (1S,2R)-1-C-(indol-3-yl)glycerol 3-phosphate + L-serine = D-glyceraldehyde 3-phosphate + L-tryptophan + H2O. It functions in the pathway amino-acid biosynthesis; L-tryptophan biosynthesis; L-tryptophan from chorismate: step 5/5. In terms of biological role, the beta subunit is responsible for the synthesis of L-tryptophan from indole and L-serine. This is Tryptophan synthase beta chain from Pseudomonas putida (strain GB-1).